The sequence spans 188 residues: Elongation factor P (188 aa).

Lysine 34 carries the post-translational modification N6-(3,6-diaminohexanoyl)-5-hydroxylysine.

Belongs to the elongation factor P family. May be beta-lysylated on the epsilon-amino group of Lys-34 by the combined action of EpmA and EpmB, and then hydroxylated on the C5 position of the same residue by EpmC (if this protein is present). Lysylation is critical for the stimulatory effect of EF-P on peptide-bond formation. The lysylation moiety may extend toward the peptidyltransferase center and stabilize the terminal 3-CCA end of the tRNA. Hydroxylation of the C5 position on Lys-34 may allow additional potential stabilizing hydrogen-bond interactions with the P-tRNA.

Its subcellular location is the cytoplasm. It participates in protein biosynthesis; polypeptide chain elongation. Functionally, involved in peptide bond synthesis. Alleviates ribosome stalling that occurs when 3 or more consecutive Pro residues or the sequence PPG is present in a protein, possibly by augmenting the peptidyl transferase activity of the ribosome. Modification of Lys-34 is required for alleviation. In Haemophilus influenzae (strain PittGG), this protein is Elongation factor P.